A 409-amino-acid chain; its full sequence is Elongation factor Tu (409 aa).

The 205-residue stretch at 10 to 214 (KPHVNIGTIG…EVDGYIPQPE (205 aa)) folds into the tr-type G domain. The segment at 19–26 (GHVDHGKT) is G1. 19 to 26 (GHVDHGKT) serves as a coordination point for GTP. Thr26 is a binding site for Mg(2+). A G2 region spans residues 60–64 (GITIN). The tract at residues 81–84 (DCPG) is G3. Residues 81–85 (DCPGH) and 136–139 (NKQD) contribute to the GTP site. The interval 136-139 (NKQD) is G4. The segment at 174–176 (SAL) is G5.

It belongs to the TRAFAC class translation factor GTPase superfamily. Classic translation factor GTPase family. EF-Tu/EF-1A subfamily. In terms of assembly, monomer.

The protein resides in the cytoplasm. It catalyses the reaction GTP + H2O = GDP + phosphate + H(+). Functionally, GTP hydrolase that promotes the GTP-dependent binding of aminoacyl-tRNA to the A-site of ribosomes during protein biosynthesis. The polypeptide is Elongation factor Tu (Trichodesmium erythraeum (strain IMS101)).